The chain runs to 503 residues: Protein DETOXIFICATION 36 (503 aa).

12 helical membrane passes run Leu-54–Leu-74, Leu-87–Gly-107, Ile-137–Leu-157, Val-166–Val-186, Ser-203–Phe-223, Phe-225–Leu-245, Gly-271–Ser-293, Leu-313–Ala-333, Ala-355–Trp-375, Phe-399–Gly-419, Ala-427–Phe-447, and Ile-456–Phe-476.

It belongs to the multi antimicrobial extrusion (MATE) (TC 2.A.66.1) family.

It localises to the membrane. This chain is Protein DETOXIFICATION 36, found in Arabidopsis thaliana (Mouse-ear cress).